The chain runs to 375 residues: Carbamoyl phosphate synthase small chain (375 aa).

A CPSase region spans residues 1-185; the sequence is MTQPAILVLE…LNANAFVQAE (185 aa). 3 residues coordinate L-glutamine: serine 47, glycine 237, and glycine 239. The region spanning 189–375 is the Glutamine amidotransferase type-1 domain; that stretch reads KVVAYDYGVK…FVASMAEAKS (187 aa). The active-site Nucleophile is the cysteine 265. L-glutamine is bound by residues leucine 266, glutamine 269, asparagine 307, glycine 309, and phenylalanine 310. Residues histidine 349 and glutamate 351 contribute to the active site.

It belongs to the CarA family. As to quaternary structure, composed of two chains; the small (or glutamine) chain promotes the hydrolysis of glutamine to ammonia, which is used by the large (or ammonia) chain to synthesize carbamoyl phosphate. Tetramer of heterodimers (alpha,beta)4.

The catalysed reaction is hydrogencarbonate + L-glutamine + 2 ATP + H2O = carbamoyl phosphate + L-glutamate + 2 ADP + phosphate + 2 H(+). It catalyses the reaction L-glutamine + H2O = L-glutamate + NH4(+). The protein operates within amino-acid biosynthesis; L-arginine biosynthesis; carbamoyl phosphate from bicarbonate: step 1/1. It functions in the pathway pyrimidine metabolism; UMP biosynthesis via de novo pathway; (S)-dihydroorotate from bicarbonate: step 1/3. Functionally, small subunit of the glutamine-dependent carbamoyl phosphate synthetase (CPSase). CPSase catalyzes the formation of carbamoyl phosphate from the ammonia moiety of glutamine, carbonate, and phosphate donated by ATP, constituting the first step of 2 biosynthetic pathways, one leading to arginine and/or urea and the other to pyrimidine nucleotides. The small subunit (glutamine amidotransferase) binds and cleaves glutamine to supply the large subunit with the substrate ammonia. The sequence is that of Carbamoyl phosphate synthase small chain from Xanthomonas campestris pv. campestris (strain ATCC 33913 / DSM 3586 / NCPPB 528 / LMG 568 / P 25).